A 421-amino-acid chain; its full sequence is Serine--tRNA ligase (421 aa).

232-234 (TAE) provides a ligand contact to L-serine. 262-264 (RSE) lines the ATP pocket. Position 285 (E285) interacts with L-serine. 349-352 (EVSS) is an ATP binding site. Residue S384 coordinates L-serine.

This sequence belongs to the class-II aminoacyl-tRNA synthetase family. Type-1 seryl-tRNA synthetase subfamily. In terms of assembly, homodimer. The tRNA molecule binds across the dimer.

The protein localises to the cytoplasm. The enzyme catalyses tRNA(Ser) + L-serine + ATP = L-seryl-tRNA(Ser) + AMP + diphosphate + H(+). It carries out the reaction tRNA(Sec) + L-serine + ATP = L-seryl-tRNA(Sec) + AMP + diphosphate + H(+). Its pathway is aminoacyl-tRNA biosynthesis; selenocysteinyl-tRNA(Sec) biosynthesis; L-seryl-tRNA(Sec) from L-serine and tRNA(Sec): step 1/1. Catalyzes the attachment of serine to tRNA(Ser). Is also able to aminoacylate tRNA(Sec) with serine, to form the misacylated tRNA L-seryl-tRNA(Sec), which will be further converted into selenocysteinyl-tRNA(Sec). This Mycoplasma mobile (strain ATCC 43663 / 163K / NCTC 11711) (Mesomycoplasma mobile) protein is Serine--tRNA ligase.